A 263-amino-acid polypeptide reads, in one-letter code: Glutamate racemase (263 aa).

Residues 10–11 (DS) and 42–43 (YG) each bind substrate. Residue cysteine 73 is the Proton donor/acceptor of the active site. Substrate is bound at residue 74–75 (NS). Cysteine 183 functions as the Proton donor/acceptor in the catalytic mechanism. Residue 184-185 (TH) coordinates substrate.

It belongs to the aspartate/glutamate racemases family.

It carries out the reaction L-glutamate = D-glutamate. The protein operates within cell wall biogenesis; peptidoglycan biosynthesis. Its function is as follows. Provides the (R)-glutamate required for cell wall biosynthesis. The polypeptide is Glutamate racemase (Acidothermus cellulolyticus (strain ATCC 43068 / DSM 8971 / 11B)).